The primary structure comprises 377 residues: Queuine tRNA-ribosyltransferase (377 aa).

The active-site Proton acceptor is the Asp91. Substrate contacts are provided by residues 91–95, Asp145, Gln189, and Gly216; that span reads DSGGF. The interval 247-253 is RNA binding; it reads GVGKPED. The active-site Nucleophile is Asp266. The interval 271–275 is RNA binding; important for wobble base 34 recognition; that stretch reads TRNAR. Cys304, Cys306, Cys309, and His335 together coordinate Zn(2+).

Belongs to the queuine tRNA-ribosyltransferase family. In terms of assembly, homodimer. Within each dimer, one monomer is responsible for RNA recognition and catalysis, while the other monomer binds to the replacement base PreQ1. The cofactor is Zn(2+).

The enzyme catalyses 7-aminomethyl-7-carbaguanine + guanosine(34) in tRNA = 7-aminomethyl-7-carbaguanosine(34) in tRNA + guanine. The protein operates within tRNA modification; tRNA-queuosine biosynthesis. Catalyzes the base-exchange of a guanine (G) residue with the queuine precursor 7-aminomethyl-7-deazaguanine (PreQ1) at position 34 (anticodon wobble position) in tRNAs with GU(N) anticodons (tRNA-Asp, -Asn, -His and -Tyr). Catalysis occurs through a double-displacement mechanism. The nucleophile active site attacks the C1' of nucleotide 34 to detach the guanine base from the RNA, forming a covalent enzyme-RNA intermediate. The proton acceptor active site deprotonates the incoming PreQ1, allowing a nucleophilic attack on the C1' of the ribose to form the product. After dissociation, two additional enzymatic reactions on the tRNA convert PreQ1 to queuine (Q), resulting in the hypermodified nucleoside queuosine (7-(((4,5-cis-dihydroxy-2-cyclopenten-1-yl)amino)methyl)-7-deazaguanosine). This is Queuine tRNA-ribosyltransferase from Vibrio parahaemolyticus serotype O3:K6 (strain RIMD 2210633).